The following is an 885-amino-acid chain: Exosome complex component 10 (885 aa).

Basic and acidic residues predominate over residues M1–Q10. Disordered regions lie at residues M1–E23 and K210–D232. K19 participates in a covalent cross-link: Glycyl lysine isopeptide (Lys-Gly) (interchain with G-Cter in SUMO2). Basic and acidic residues predominate over residues S217–D230. The region spanning H289–L455 is the 3'-5' exonuclease domain. Residues D313, E315, D371, and D440 each contribute to the Mg(2+) site. An HRDC domain is found at N503–K583. K583 participates in a covalent cross-link: Glycyl lysine isopeptide (Lys-Gly) (interchain with G-Cter in SUMO1); alternate. K583 participates in a covalent cross-link: Glycyl lysine isopeptide (Lys-Gly) (interchain with G-Cter in SUMO2); alternate. K710 participates in a covalent cross-link: Glycyl lysine isopeptide (Lys-Gly) (interchain with G-Cter in SUMO2). The tract at residues V730–R885 is disordered. Composition is skewed to basic and acidic residues over residues K732–S756 and A776–Q794. S821 is subject to Phosphoserine. Residues K833, K859, and K873 each participate in a glycyl lysine isopeptide (Lys-Gly) (interchain with G-Cter in SUMO2) cross-link.

This sequence belongs to the exosome component 10/RRP6 family. As to quaternary structure, component of the RNA exosome complex. The catalytically inactive RNA exosome core complex (Exo-9) associates with the catalytic subunit EXOSC10/RRP6 (via its N-terminus). Exo-9 may associate with DIS3 to form the nucleolar exosome complex, or DIS3L to form the cytoplasmic exosome complex. The RNA exosome complex interacts with cofactors C1D/RRP47, MPHOSPH6/MPP6 and MTREX/MTR4. Interacts with MTREX; the interaction with MTREX mediates the association of MTREX with nuclear RNA exosomes. Part of the small subunit (SSU) processome, composed of more than 70 proteins and the RNA chaperone small nucleolar RNA (snoRNA) U3. Interacts with ALYREF/THOC4. Interacts with DHX36; this interaction occurs in a RNase-insensitive manner. Interacts with NRDE2. Interacts (via C-terminus) with USP36 (via C-terminus); the interaction is facilitated by the association with RNA and promotes sumoylation of EXOSC10. It depends on Mg(2+) as a cofactor. Post-translationally, sumoylated by USP36; sumoylation does not significantly affect EXOSC10 nucleolar localization and association with core exosome and USP36, but regulates the nucleolar RNA exosome activity in rRNA processing by promoting binding of EXOSC10 to pre-rRNAs. Effects of sumoylation on EXOSC10 levels vary between different studies. Sumoylation of EXOSC10 is required for the modulation of EXOSC10 effects on cellular protein translation and cell proliferation. Sumoylation is promoted by mild hypothermia. Expressed in testis (at protein level).

Its subcellular location is the cytoplasm. The protein localises to the nucleus. It localises to the nucleolus. The protein resides in the nucleoplasm. Functionally, catalytic component of the RNA exosome complex which has 3'-&gt;5' exoribonuclease activity and participates in a multitude of cellular RNA processing and degradation events. In the nucleus, the RNA exosome complex is involved in proper maturation of stable RNA species such as rRNA, snRNA and snoRNA, in the elimination of RNA processing by-products and non-coding 'pervasive' transcripts, such as antisense RNA species and promoter-upstream transcripts (PROMPTs), and of mRNAs with processing defects, thereby limiting or excluding their export to the cytoplasm. Part of the small subunit (SSU) processome, first precursor of the small eukaryotic ribosomal subunit. During the assembly of the SSU processome in the nucleolus, many ribosome biogenesis factors, an RNA chaperone and ribosomal proteins associate with the nascent pre-rRNA and work in concert to generate RNA folding, modifications, rearrangements and cleavage as well as targeted degradation of pre-ribosomal RNA by the RNA exosome. The RNA exosome may be involved in Ig class switch recombination (CSR) and/or Ig variable region somatic hypermutation (SHM) by targeting AICDA deamination activity to transcribed dsDNA substrates. In the cytoplasm, the RNA exosome complex is involved in general mRNA turnover and specifically degrades inherently unstable mRNAs containing AU-rich elements (AREs) within their 3' untranslated regions, and in RNA surveillance pathways, preventing translation of aberrant mRNAs. It seems to be involved in degradation of histone mRNA. EXOSC10 is required for nucleolar localization of C1D and probably mediates the association of MTREX, C1D and MPHOSPH6 with the RNA exosome involved in the maturation of 5.8S rRNA. Plays a role in the recruitment of replication protein A complex (RPA) and RAD51 to DNA double-strand breaks caused by irradiation, contributing to DNA repair by homologous recombination. Regulates levels of damage-induced RNAs in order to prevent DNA-RNA hybrid formation at DNA double-strand breaks and limit DNA end resection after damage. Plays a role in oocyte development, maturation and survival. Required for normal testis development and mitotic division of spermatogonia. Plays a role in proper embryo development. Required for global protein translation. Required for cell proliferation. The protein is Exosome complex component 10 of Rattus norvegicus (Rat).